A 179-amino-acid polypeptide reads, in one-letter code: MTALYYTYYPSPVGRLLILSDGESITHIDFEKEQYAPNPKWHKQDELPVFQKVRLAFERYFNGEVECFSNIPLKPEGTAFQQAIWQALREIDYGELSTYGELALRINNPKAVRAVGGAVGSNPISIIIPCHRILGKDRTLTGFGGGLEAKRFLLQLEKIPYIDKGTENTKPRFFKKYHE.

Cys-130 functions as the Nucleophile; methyl group acceptor in the catalytic mechanism.

Belongs to the MGMT family.

The protein localises to the cytoplasm. The enzyme catalyses a 6-O-methyl-2'-deoxyguanosine in DNA + L-cysteinyl-[protein] = S-methyl-L-cysteinyl-[protein] + a 2'-deoxyguanosine in DNA. It catalyses the reaction a 4-O-methyl-thymidine in DNA + L-cysteinyl-[protein] = a thymidine in DNA + S-methyl-L-cysteinyl-[protein]. Involved in the cellular defense against the biological effects of O6-methylguanine (O6-MeG) and O4-methylthymine (O4-MeT) in DNA. Repairs the methylated nucleobase in DNA by stoichiometrically transferring the methyl group to a cysteine residue in the enzyme. This is a suicide reaction: the enzyme is irreversibly inactivated. This Haemophilus influenzae (strain ATCC 51907 / DSM 11121 / KW20 / Rd) protein is Methylated-DNA--protein-cysteine methyltransferase.